The chain runs to 705 residues: Dolichyl-diphosphooligosaccharide--protein glycosyltransferase subunit STT3A (705 aa).

Topologically, residues 1–15 (MTKLGFLRLSYEKQD) are cytoplasmic. The helical transmembrane segment at 16-34 (TLLKLLILSMAAVLSFSTR) threads the bilayer. The Lumenal segment spans residues 35 to 111 (LFAVLRFESV…VLHFFHITID (77 aa)). The DXD motif 1 signature appears at 47–49 (EFD). A Mn(2+)-binding site is contributed by D49. A helical membrane pass occupies residues 112-141 (IRNVCVFLAPLFSSFTTIVTYHLTKELKDA). G142 is a topological domain (cytoplasmic). The helical transmembrane segment at 143–158 (AGLLAAAMIAVVPGYI) threads the bilayer. At 159–170 (SRSVAGSYDNEG) the chain is on the lumenal side. Residues D167 and E169 each contribute to the Mn(2+) site. Residues 167-169 (DNE) carry the DXD motif 2 motif. The chain crosses the membrane as a helical span at residues 171-188 (IAIFCMLLTYYMWIKAVK). The Cytoplasmic segment spans residues 189–191 (TGS). A helical membrane pass occupies residues 192 to 207 (IYWAAKCALAYFYMVS). Residues 208 to 210 (SWG) lie on the Lumenal side of the membrane. A helical transmembrane segment spans residues 211 to 229 (GYVFLINLIPLHVLVLMLT). Topologically, residues 230–234 (GRFSH) are cytoplasmic. The helical transmembrane segment at 235–253 (RIYVAYCTVYCLGTILSMQ) threads the bilayer. The Lumenal segment spans residues 254–265 (ISFVGFQPVLSS). The helical transmembrane segment at 266–283 (EHMAAFGVFGLCQIHAFV) threads the bilayer. Residues 284–298 (DYLRSKLNPQQFEVL) lie on the Cytoplasmic side of the membrane. A helical membrane pass occupies residues 299-317 (FRSVISLVGFVLLTVGALL). Residues 318–356 (MLTGKISPWTGRFYSLLDPSYAKNNIPIIASVSEHQPTT) are Lumenal-facing. The SVSE motif motif lies at 348-351 (SVSE). Residues 357-379 (WSSYYFDLQLLVFMFPVGLYYCF) traverse the membrane as a helical segment. At 380–385 (SNLSDA) the chain is on the cytoplasmic side. The chain crosses the membrane as a helical span at residues 386 to 402 (RIFIIMYGVTSMYFSAV). Topologically, residues 403–406 (MVRL) are lumenal. R405 is a dolichyl diphosphooligosaccharide binding site. A helical membrane pass occupies residues 407 to 428 (MLVLAPVMCILSGIGVSQVLST). Topologically, residues 429-453 (YMKNLDISRPDKKSKKQQDSTYPIK) are cytoplasmic. A helical transmembrane segment spans residues 454-473 (NEVASGMILVMAFFLITYTF). The Lumenal portion of the chain corresponds to 474–705 (HSTWVTSEAY…DLDNRGLSRT (232 aa)). The segment at 525 to 527 (WWD) is interacts with target acceptor peptide in protein substrate. The short motif at 525–529 (WWDYG) is the WWDYG motif element. Residue Y530 participates in dolichyl diphosphooligosaccharide binding. 2 N-linked (GlcNAc...) asparagine glycosylation sites follow: N537 and N544. N548 is a glycosylation site (N-linked (GlcNAc...) (high mannose) asparagine). Residues 592–599 (DINKFLWM) carry the DK motif motif.

Belongs to the STT3 family. In terms of assembly, component of the oligosaccharyltransferase (OST) complex. There are 2 OST complexes, OST-A and OST-B, which contain STT3A or STT3B as catalytic subunit, respectively. OST-A and OST-B contain common core subunits RPN1, RPN2, OST48, OST4, DAD1 and TMEM258, and OST-A contains DC2/OSTC and KRTCAP2/KCP2 specific accessory subunits. OST-A complex assembly occurs through the formation of 3 subcomplexes. Subcomplex 1 contains RPN1 and TMEM258, subcomplex 2 contains the OST-A-specific subunits STT3A, DC2/OSTC, and KCP2 as well as the core subunit OST4, and subcomplex 3 contains RPN2, DAD1, and OST48. The OST-A complex can form stable complexes with the Sec61 complex or with both the Sec61 and TRAP complexes. Mg(2+) is required as a cofactor. The cofactor is Mn(2+).

It localises to the endoplasmic reticulum membrane. It carries out the reaction a di-trans,poly-cis-dolichyl diphosphooligosaccharide + L-asparaginyl-[protein] = N(4)-(oligosaccharide-(1-&gt;4)-N-acetyl-beta-D-glucosaminyl-(1-&gt;4)-N-acetyl-beta-D-glucosaminyl)-L-asparaginyl-[protein] + a di-trans,poly-cis-dolichyl diphosphate + H(+). It participates in protein modification; protein glycosylation. Its function is as follows. Catalytic subunit of the oligosaccharyl transferase (OST) complex that catalyzes the initial transfer of a defined glycan (Glc(3)Man(9)GlcNAc(2) in eukaryotes) from the lipid carrier dolichol-pyrophosphate to an asparagine residue within an Asn-X-Ser/Thr consensus motif in nascent polypeptide chains, the first step in protein N-glycosylation. N-glycosylation occurs cotranslationally and the complex associates with the Sec61 complex at the channel-forming translocon complex that mediates protein translocation across the endoplasmic reticulum (ER). All subunits are required for a maximal enzyme activity. This subunit contains the active site and the acceptor peptide and donor lipid-linked oligosaccharide (LLO) binding pockets. STT3A is present in the majority of OST complexes and mediates cotranslational N-glycosylation of most sites on target proteins, while STT3B-containing complexes are required for efficient post-translational glycosylation and mediate glycosylation of sites that have been skipped by STT3A. STT3A-containing OST-A complex is also required to prevent hyperglycosylation of some target proteins by preventing glycosylation of facultative sites before folding of target proteins is completed. In Canis lupus familiaris (Dog), this protein is Dolichyl-diphosphooligosaccharide--protein glycosyltransferase subunit STT3A.